The chain runs to 181 residues: Protein Syd (181 aa).

It belongs to the Syd family.

The protein localises to the cell inner membrane. Its function is as follows. Interacts with the SecY protein in vivo. May bind preferentially to an uncomplexed state of SecY, thus functioning either as a chelating agent for excess SecY in the cell or as a regulatory factor that negatively controls the translocase function. In Citrobacter koseri (strain ATCC BAA-895 / CDC 4225-83 / SGSC4696), this protein is Protein Syd.